The chain runs to 186 residues: MSPGLQKGSRLMENRSPPSSFSIEHILGLDKKTEVASSPIIKHHRPWIQCNSEGVDGTFWHIPVISCDLPVQVHALRRSMGEETQVRLEKCCGEEDRLTYKRELSWYRGRRPRTAFTRSQIEILENVFRVNSYPGIDIREELAGKLALDEDRIQIWFQNRRAKLKRSHRESQFLMVKDSLSSKIQE.

Positions 109–168 form a DNA-binding region, homeobox; that stretch reads GRRPRTAFTRSQIEILENVFRVNSYPGIDIREELAGKLALDEDRIQIWFQNRRAKLKRSH.

The protein belongs to the ANF homeobox family. As to quaternary structure, interacts (via N-terminus) with zyx.

Its subcellular location is the nucleus. Its function is as follows. Regulates the earliest stages of development of the anterior neural plate. Plays a role in forebrain development by inhibiting the expression of otx2 and pax6 in the rostral region of the anterior neural plate. Necessary for both neural differentiation and neural patterning. Controls Spemann organizer development. May act as a transcriptional repressor. This is Homeobox expressed in ES cells 1 from Xenopus tropicalis (Western clawed frog).